We begin with the raw amino-acid sequence, 368 residues long: Aminomethyltransferase (368 aa).

This sequence belongs to the GcvT family. As to quaternary structure, the glycine cleavage system is composed of four proteins: P, T, L and H.

It carries out the reaction N(6)-[(R)-S(8)-aminomethyldihydrolipoyl]-L-lysyl-[protein] + (6S)-5,6,7,8-tetrahydrofolate = N(6)-[(R)-dihydrolipoyl]-L-lysyl-[protein] + (6R)-5,10-methylene-5,6,7,8-tetrahydrofolate + NH4(+). In terms of biological role, the glycine cleavage system catalyzes the degradation of glycine. This is Aminomethyltransferase from Xylella fastidiosa (strain M23).